Here is a 538-residue protein sequence, read N- to C-terminus: MEESVNQMQPLNEKQIANSQDGYVWQVTDMNRLHRFLCFGSEGGTYYIKEQKLGLENAEALIRLIEDGRGCEVIQEIKSFSQEGRTTKQEPMLFALAICSQCSDISTKQAAFKAVSEVCRIPTHLFTFIQFKKDLKESMKCGMWGRALRKAIADWYNEKGGMALALAVTKYKQRNGWSHKDLLRLSHLKPSSEGLAIVTKYITKGWKEVHELYKEKALSVETEKLLKYLEAVEKVKRTRDELEVIHLIEEHRLVREHLLTNHLKSKEVWKALLQEMPLTALLRNLGKMTANSVLEPGNSEVSLVCEKLCNEKLLKKARIHPFHILIALETYKTGHGLRGKLKWRPDEEILKALDAAFYKTFKTVEPTGKRFLLAVDVSASMNQRVLGSILNASTVAAAMCMVVTRTEKDSYVVAFSDEMVPCPVTTDMTLQQVLMAMSQIPAGGTDCSLPMIWAQKTNTPADVFIVFTDNETFAGGVHPAIALREYRKKMDIPAKLIVCGMTSNGFTIADPDDRGMLDMCGFDTGALDVIRNFTLDMI.

Met-1 bears the N-acetylmethionine mark. Ser-4 and Ser-19 each carry phosphoserine. Residues 16-369 (IANSQDGYVW…TFKTVEPTGK (354 aa)) enclose the TROVE domain. The interval 120–284 (RIPTHLFTFI…EMPLTALLRN (165 aa)) is RNA-binding. Residues Lys-224 and Lys-359 each carry the N6-acetyllysine modification. Positions 361 to 538 (FKTVEPTGKR…VIRNFTLDMI (178 aa)) are VWFA-like domain. Positions 378, 380, and 445 each coordinate a divalent metal cation.

This sequence belongs to the Ro 60 kDa family. As to quaternary structure, identified in a IGF2BP1-dependent mRNP granule complex containing untranslated mRNAs. Found in a complex with PUF60 and Y5 RNA. Interacts with RAB11FIP5.

It localises to the cytoplasm. In terms of biological role, RNA-binding protein that binds to misfolded non-coding RNAs, pre-5S rRNA, and several small cytoplasmic RNA molecules known as Y RNAs. Binds to endogenous Alu retroelements which are induced by type I interferon and stimulate porinflammatory cytokine secretion. Regulates the expression of Alu retroelements as well as inflammatory genes. May play roles in cilia formation and/or maintenance. This Homo sapiens (Human) protein is RNA-binding protein RO60.